The primary structure comprises 156 residues: Small ribosomal subunit protein uS7 (156 aa).

The protein belongs to the universal ribosomal protein uS7 family. As to quaternary structure, part of the 30S ribosomal subunit. Contacts proteins S9 and S11.

Functionally, one of the primary rRNA binding proteins, it binds directly to 16S rRNA where it nucleates assembly of the head domain of the 30S subunit. Is located at the subunit interface close to the decoding center, probably blocks exit of the E-site tRNA. This chain is Small ribosomal subunit protein uS7, found in Clostridium botulinum (strain 657 / Type Ba4).